We begin with the raw amino-acid sequence, 582 residues long: Phosphoribosylaminoimidazole carboxylase (582 aa).

The ATP-grasp domain occupies 114-305 (KKYLAEKGVA…QFENHLRAIL (192 aa)). 143–200 (AGRLGLPLMLKAKTLAYDGRGNSPLKSTSSEDIQASLKFLGDRPLYAEGWAPFVKEVA) is a binding site for ATP.

It in the C-terminal section; belongs to the AIR carboxylase family. Class I subfamily.

It carries out the reaction 5-amino-1-(5-phospho-D-ribosyl)imidazole-4-carboxylate + H(+) = 5-amino-1-(5-phospho-beta-D-ribosyl)imidazole + CO2. Its pathway is purine metabolism; IMP biosynthesis via de novo pathway; 5-amino-1-(5-phospho-D-ribosyl)imidazole-4-carboxylate from 5-amino-1-(5-phospho-D-ribosyl)imidazole (carboxylase route): step 1/1. The protein is Phosphoribosylaminoimidazole carboxylase (ADE2) of Cryptococcus neoformans var. grubii serotype A (strain H99 / ATCC 208821 / CBS 10515 / FGSC 9487) (Filobasidiella neoformans var. grubii).